The primary structure comprises 126 residues: UPF0325 protein VFMJ11_2099 (126 aa).

It belongs to the UPF0325 family.

The protein is UPF0325 protein VFMJ11_2099 of Aliivibrio fischeri (strain MJ11) (Vibrio fischeri).